Consider the following 96-residue polypeptide: Protein CLAVATA 3 (96 aa).

An N-terminal signal peptide occupies residues 1 to 21; that stretch reads MDSKSFLLLLLLFCFLFLHDA. The disordered stretch occupies residues 68-96; that stretch reads ELRTVPSGPDPLHHHVNPPRQPRNNFQLP. 2 positions are modified to hydroxyproline: proline 73 and proline 76. Proline 76 carries O-linked (Ara...) hydroxyproline glycosylation.

It belongs to the CLV3/ESR signal peptide family. Interacts with the extracellular leucine-rich repeat region of CLV1. Interacts with CLV2. CLV3-derived CLE peptides interacts with a tetrameric complex made of two CLV2/CRN heterodimers. Post-translationally, the MCLV3 peptide contains two hydroxyprolines, but hydroxylation had no direct effect on MCLV3 activity. The O-glycosylation (arabinosylation) of the hydroxyproline P-76 enhances binding affinity of the MCLV3 peptide for its receptor. In terms of tissue distribution, first detected in heart stage embryos in a patch of cells between the developing cotyledons. In vegetative and inflorescence meristems, expressed in a small cone of cells at the meristem apex.

The protein resides in the secreted. The protein localises to the extracellular space. Functionally, extracellular signal that regulates meristem maintenance. Acts with CLV1 as a ligand-receptor pair in a signal transduction pathway coordinating growth between adjacent meristematic regions and controlling the balance between meristem cell proliferation and differentiation. In terms of biological role, the secreted peptide MCLV3 activates a signal transduction cascade to restrict WUSCHEL (WUS) expression, inducing shoot and root meristem consumption as cells differentiated into other organs. The polypeptide is Protein CLAVATA 3 (Arabidopsis thaliana (Mouse-ear cress)).